A 1790-amino-acid chain; its full sequence is MPVKRQSKVYYESDSDDDDDEFKELATLRKPISNRDNPLSLQFEIPASVQSVIHKIEESHIFRAKEEVIWRLTEIMSNVELIMTRYNIDSMSPGRKGSSSESQKKKRKAFLEKIATVMTNVDLRERTLSKILSWLEEWNLILSEVSAINMDDYYHWTVKMELIPDTLKRISKNVDSLIQMALLLVEEKKRAKKRILARGTLWKAWKDRAIKRPATAQALRLDQMIFDQIGLNAKVSEIQGMLQELIGTAMFSKLENTAIKYMSTTVINLSKALNTVSDELKLARALGVTLTPEQYKEDRISLTPLQAQVLGITLNLQQAKALGITLTPEQVKAQRVNLIPQQYQVHGTTLTTQQAEAQRTNLTPEQAKALGLPLIPPKPITFTREQTQALGITPTHQPITLTSEQVQALGITPTHQPITLTPEQAQALALILTTEQVKTQRINLSPDQTQALGITPTPQPITFTPEQTQALGITPTPQLITLTPEQAKALANTLTAEQVSLSPQQAEALGITPTPQPTTLTPEQAQALGITPTPQPITLTPEQVQALGITPNRESITLSPEQAQALGITPTPQPTTLTPEQTQALGITPTPQPITLTPEQAQALGITPTPQPITLTPEQTQALGITPTPQPITLTPEQAQALGITPTPQPITLTPEQTQALGITPTPQPITLTPEQAQALGITPTPQPITLTPEQAQALGITPTPQPITLTPEQAQALGITPTPQPITLTPEQTQALGITPTPQPITLTPEQAQALGITPTPQPITLTPEQVQALGITPTPQPITLTPEQAQALGITPTPQPITLTPEQAQALGITPTPQPITLTPEQTQALGITPTPQPITLTPEQAQALGITPTPQPITLTPELVQALGITPTPQPITLTPEQAQALGITPTPQPTTLSPEQAQALGITPTPQPITLTPEQAQALGITPTPQPTTLSPEQAQALGISLIPKQQEISLSPEQAQALGLTLTPQQAQVQKIYLTPQQAQALGITVSPEQAKAKGISLTPEEAHSLGIILTVEQAKAKRINLTPQQAQDLGLTLTPEQAQDLGISLIPKQEISFSPLQAQAMGLTLTPQQAQVQKIYLTPQQAQALGITVSPEQAKGISLTPEEAHSLGIILTVEQAKAQRINLTPQQAQDLGLTLTPEQAQDLGISLIPKQQEISFSPLQAQAMGLTLTPQQAQVQKIYLTPQQAQALGITVSPEQAKGISLTPEEAHSLGIILTVEQAKAQRINLTPQQAQDLGITLTPEQAQDLGISLIPKQQEISFSPLQAQAMGLTLTPQQAQVQKIYLTPQQAQALGITVSPEQAKGISLTPEEAHSLGIALTVEQAKAQRINLTPQQAQDLGLTLTPEQAQDLGIASTLKQAEAVGIIPTPTPEPYQERRLSLTSEQVQALRTSFPTKETLSLGIYLTPKQAQYLGITLTASQAKVMKICLTPEQAQALGITVTPKQAKARRTSLTPEQAQALGVILTPEQAQAHRITVTPEQAQALGIALTPEQAHALGIALTPEQAQAQDKPWTPTPVSSTREAKMIVSPTDQHPEDGYVVDVEAQRKNLVTLNQAAQTSALPAQYLTIAKNLIIELLHIDTVRLGYLSRKYVAYRLIQLARNHLTKRVKTIQNTGKGYEVQSLYTMLDRIDQYQKKVMHSWTDKQKQLEQRRKQCLRSMTQFFSQLERGYKLSLSQPMPSIPSFKKIPGFTKLQRPVLELLIDDSKRSDLFKTLGQASVEAVWNADLSTSSYPIIEKAPMSALWAQLGGYPDIPKLLQLDIQSTFRKSLASIRSQSKKIRK.

The protein belongs to the FAM186 family.

In Mus musculus (Mouse), this protein is Protein FAM186A (FAM186A).